The sequence spans 229 residues: ABC transporter I family member 1 (229 aa).

In terms of domain architecture, ABC transporter spans 11-228; the sequence is LLLQNVSCMR…LIDMLDRADI (218 aa). Residue 43–50 coordinates ATP; the sequence is GTNGSGKS.

This sequence belongs to the ABC transporter superfamily. ABCI family.

Its subcellular location is the membrane. The catalysed reaction is heme b(in) + ATP + H2O = heme b(out) + ADP + phosphate + H(+). Part of the ABC transporter complex CcmAB involved in the biogenesis of c-type cytochromes; once thought to export heme, this seems not to be the case, but its exact role is uncertain. Responsible for energy coupling to the transport system. The sequence is that of ABC transporter I family member 1 (ABCI1) from Arabidopsis thaliana (Mouse-ear cress).